The primary structure comprises 209 residues: Thymidine kinase (209 aa).

ATP contacts are provided by residues Ala-9–Ser-16 and Asp-88–Gln-91. Glu-89 (proton acceptor) is an active-site residue. Zn(2+) is bound by residues Cys-146, Cys-148, Cys-183, and His-186.

Belongs to the thymidine kinase family. Homotetramer.

Its subcellular location is the cytoplasm. The catalysed reaction is thymidine + ATP = dTMP + ADP + H(+). The protein is Thymidine kinase of Legionella pneumophila subsp. pneumophila (strain Philadelphia 1 / ATCC 33152 / DSM 7513).